The following is a 210-amino-acid chain: MRDPVDTYMNYLVPMVVEQTNRGERAYDIYSRLLKERIIFLTGPVEDGMSTLAVAQLLFLEAENPKKEISMYINSPGGVVTSGLAIYDTMQFIRPAVSTLCIGQAASMGSLLLTAGEKGLRFALPNARIMVHQPSGGFQGQVTDIMLHAQEILSLKKRLNEIYVKHTGQPIEKIEDALERDNFMTANAAQEFGLIDTVIDKRPSDEPAKA.

The active-site Nucleophile is S107. The active site involves H132.

This sequence belongs to the peptidase S14 family. As to quaternary structure, fourteen ClpP subunits assemble into 2 heptameric rings which stack back to back to give a disk-like structure with a central cavity, resembling the structure of eukaryotic proteasomes.

It is found in the cytoplasm. It catalyses the reaction Hydrolysis of proteins to small peptides in the presence of ATP and magnesium. alpha-casein is the usual test substrate. In the absence of ATP, only oligopeptides shorter than five residues are hydrolyzed (such as succinyl-Leu-Tyr-|-NHMec, and Leu-Tyr-Leu-|-Tyr-Trp, in which cleavage of the -Tyr-|-Leu- and -Tyr-|-Trp bonds also occurs).. In terms of biological role, cleaves peptides in various proteins in a process that requires ATP hydrolysis. Has a chymotrypsin-like activity. Plays a major role in the degradation of misfolded proteins. The polypeptide is ATP-dependent Clp protease proteolytic subunit (Azorhizobium caulinodans (strain ATCC 43989 / DSM 5975 / JCM 20966 / LMG 6465 / NBRC 14845 / NCIMB 13405 / ORS 571)).